The chain runs to 704 residues: DNA-binding protein RFX2 (704 aa).

The disordered stretch occupies residues 1–39 (MQNSEGGADSPASVALRPSAAAPPVPASPQRVLVQAASS). Residues 10 to 20 (SPASVALRPSA) are compositionally biased toward low complexity. Serine 28 is subject to Phosphoserine. The RFX-type winged-helix DNA-binding region spans 199-274 (HLQWLLDNYE…YHYYGIRLKP (76 aa)). The disordered stretch occupies residues 292–334 (QQPMHQKPRYRPAQKTDSLGDSSSHSGLHSTPEQTTAAQNQHH). Over residues 307 to 334 (TDSLGDSSSHSGLHSTPEQTTAAQNQHH) the composition is skewed to low complexity. The residue at position 416 (serine 416) is a Phosphoserine.

The protein belongs to the RFX family. As to quaternary structure, homodimer; probably only forms homodimers in testis. Heterodimer; heterodimerizes with RFX1 and RFX3.

It is found in the nucleus. The protein resides in the cytoplasm. Its function is as follows. Transcription factor that acts as a key regulator of spermatogenesis. Acts by regulating expression of genes required for the haploid phase during spermiogenesis, such as genes required for cilium assembly and function. Recognizes and binds the X-box, a regulatory motif with DNA sequence 5'-GTNRCC(0-3N)RGYAAC-3' present on promoters. Probably activates transcription of the testis-specific histone gene H1-6. This is DNA-binding protein RFX2 (RFX2) from Pongo abelii (Sumatran orangutan).